The chain runs to 490 residues: Serine palmitoyltransferase 2 (490 aa).

Residues 10–30 form a helical membrane-spanning segment; the sequence is VDDVGYLPILFLYIAYAFIIF. An N6-(pyridoxal phosphate)lysine modification is found at K321.

This sequence belongs to the class-II pyridoxal-phosphate-dependent aminotransferase family. In terms of assembly, forms a heterodimer with sptA. The cofactor is pyridoxal 5'-phosphate.

The protein localises to the endoplasmic reticulum membrane. It carries out the reaction L-serine + hexadecanoyl-CoA + H(+) = 3-oxosphinganine + CO2 + CoA. It participates in lipid metabolism; sphingolipid metabolism. Its function is as follows. Catalytic subunit of serine palmitoyltransferase (SPT), which catalyzes the committed step in the synthesis of sphingolipids, the condensation of serine with palmitoyl CoA to form the long chain base 3-ketosphinganine. The protein is Serine palmitoyltransferase 2 (sptB) of Dictyostelium discoideum (Social amoeba).